We begin with the raw amino-acid sequence, 218 residues long: Transmembrane gamma-carboxyglutamic acid protein 1 (218 aa).

A propeptide spanning residues 1–20 is cleaved from the precursor; sequence MGRIFLTGEKANSVLKRYPR. Residues 20 to 66 enclose the Gla domain; the sequence is RANGLFEEIRQGNIERECKEEVCTFEEAREAFENNEKTKEFWNTYTK. Topologically, residues 21 to 80 are extracellular; sequence ANGLFEEIRQGNIERECKEEVCTFEEAREAFENNEKTKEFWNTYTKAQQGESNRGSDWFQ. The cysteines at positions 37 and 42 are disulfide-linked. The chain crosses the membrane as a helical span at residues 81 to 101; sequence FYLTFPLIFGLFIILLVIFLI. Residues 102-218 lie on the Cytoplasmic side of the membrane; it reads WRCFLRNKTR…AMVPVATTIK (117 aa). The segment at 160–192 is disordered; the sequence is STRLSNCDPPPTYEEATGQMNLRRSETEPHLDP. A compositionally biased stretch (basic and acidic residues) spans 182 to 192; sequence RRSETEPHLDP.

In terms of processing, gla residues are produced after subsequent post-translational modifications of glutamate by a vitamin K-dependent gamma-carboxylase.

The protein resides in the membrane. This Bos taurus (Bovine) protein is Transmembrane gamma-carboxyglutamic acid protein 1 (PRRG1).